The following is a 604-amino-acid chain: Replication protein A 70 kDa DNA-binding subunit B (604 aa).

Positions 170–256 form a DNA-binding region, OB; that stretch reads WTIKVRVTNK…QNDYEMTLNE (87 aa). Residues 468-488 form a C4-type zinc finger; it reads CKTCNKKVTEAMDSGYWCESC.

Belongs to the replication factor A protein 1 family. In terms of assembly, heterotrimer of RPA1, RPA2 and RPA3 (canonical replication protein A complex).

It is found in the nucleus. Component of the replication protein A complex (RPA) required for DNA recombination, repair and replication. The activity of RPA is mediated by single-stranded DNA binding and protein interactions. Probably involved in repair of double-strand DNA breaks (DSBs) induced by genotoxic stresses. The chain is Replication protein A 70 kDa DNA-binding subunit B (RPA1B) from Arabidopsis thaliana (Mouse-ear cress).